A 372-amino-acid polypeptide reads, in one-letter code: Rab9 effector protein with kelch motifs (372 aa).

Kelch repeat units lie at residues 49 to 95, 100 to 146, 151 to 203, 204 to 250, and 254 to 303; these read KVFI…FIPS, SIWV…TSSA, QLYV…AAGT, KLFI…SAVA, and HLYV…IIPW. The disordered stretch occupies residues 309 to 341; the sequence is SEKEDSNSATVNRDAEKGDSTEKGVTQGGDSQE. Over residues 321 to 330 the composition is skewed to basic and acidic residues; that stretch reads RDAEKGDSTE. One copy of the Kelch 6 repeat lies at 349 to 372; the sequence is LCFVFGGMNTEGEIYDDCIVTAVD.

In terms of assembly, interacts with PIKFYVE; the interaction recruits RABEPK to the endosomal membrane. Interacts with RAB9 in its GTP-bound conformation. Post-translationally, phosphorylated on Ser residues by PIKFYVE.

The protein localises to the cytoplasm. Its subcellular location is the endosome membrane. Rab9 effector required for endosome to trans-Golgi network (TGN) transport. The protein is Rab9 effector protein with kelch motifs (RABEPK) of Bos taurus (Bovine).